We begin with the raw amino-acid sequence, 255 residues long: Glioma pathogenesis-related protein 1 (255 aa).

An N-terminal signal peptide occupies residues Met1–Ser17. Positions Gln39–Tyr164 constitute an SCP domain. Residues Ser224–Val244 traverse the membrane as a helical segment.

It belongs to the CRISP family.

The protein localises to the membrane. The polypeptide is Glioma pathogenesis-related protein 1 (Glipr1) (Mus musculus (Mouse)).